Consider the following 207-residue polypeptide: Large ribosomal subunit protein uL4 (207 aa).

The disordered stretch occupies residues 44-78 (MRQGTHKTKNRAEVSGGGRKPWRQKGTGRARQGSI).

This sequence belongs to the universal ribosomal protein uL4 family. As to quaternary structure, part of the 50S ribosomal subunit.

Its function is as follows. One of the primary rRNA binding proteins, this protein initially binds near the 5'-end of the 23S rRNA. It is important during the early stages of 50S assembly. It makes multiple contacts with different domains of the 23S rRNA in the assembled 50S subunit and ribosome. Functionally, this protein when expressed in E.coli represses the endogenous S10 operon; this may not occur in B.stearothermophilus however. In terms of biological role, forms part of the polypeptide exit tunnel. The polypeptide is Large ribosomal subunit protein uL4 (rplD) (Geobacillus stearothermophilus (Bacillus stearothermophilus)).